The chain runs to 345 residues: Nuclear egress protein 1 (345 aa).

The segment at 115–247 (CISLSEMGYT…FVFKPGSPLH (133 aa)) adopts a CCCH-type zinc-finger fold.

The protein belongs to the herpesviridae NEC1 protein family. Forms a heterohexameric complex with NEC2. Interacts with capsid vertex specific component 2/CVC2; this interaction directs the capsid to the host inner nuclear membrane to initiate budding. Phosphorylated at serine residues in the N-terminus. This phosphorylation regulates the localization within the inner nuclear membrane.

It localises to the host nucleus inner membrane. Functionally, plays an essential role in virion nuclear egress, the first step of virion release from infected cell. Within the host nucleus, NEC1 interacts with the newly formed capsid through the vertexes and directs it to the inner nuclear membrane by associating with NEC2. Induces the budding of the capsid at the inner nuclear membrane as well as its envelopment into the perinuclear space. There, the NEC1/NEC2 complex promotes the fusion of the enveloped capsid with the outer nuclear membrane and the subsequent release of the viral capsid into the cytoplasm where it will reach the secondary budding sites in the host Golgi or trans-Golgi network. The sequence is that of Nuclear egress protein 1 from Psittacid herpesvirus 1 (isolate Amazon parrot/-/97-0001/1997) (PsHV-1).